The primary structure comprises 96 residues: MKATILLAVLVAVFVAGTEAHSHACTSYWCGKFCGTASCTHYLCRVLHPGKMCACVHCSRVNNPFRVNQVAKSINDLDYTPIMKSMENLDNGMDML.

Positions 1 to 20 (MKATILLAVLVAVFVAGTEA) are cleaved as a signal peptide. A propeptide spans 61 to 96 (VNNPFRVNQVAKSINDLDYTPIMKSMENLDNGMDML) (removed in mature form).

Contains four disulfide bonds. As to expression, hemocytes.

It is found in the secreted. Its function is as follows. Bacteriolytic activity against Gram-positive bacteria M.luteus, B.megaterium and A.viridans. The protein is Myticin-A of Mytilus galloprovincialis (Mediterranean mussel).